The chain runs to 82 residues: T-complex protein 1 subunit gamma (82 aa).

Gly-15 contributes to the ADP binding site. Residue Gly-15 participates in ATP binding. Asp-66 lines the Mg(2+) pocket. ADP-binding residues include Gly-67, Thr-68, Thr-69, and Ser-70. Positions 67, 68, and 69 each coordinate ATP.

It belongs to the TCP-1 chaperonin family. Component of the chaperonin-containing T-complex (TRiC), a hexadecamer composed of two identical back-to-back stacked rings enclosing a protein folding chamber. Each ring is made up of eight different subunits: TCP1/CCT1, CCT2, CCT3, CCT4, CCT5, CCT6A/CCT6, CCT7, CCT8. Interacts with PACRG. Interacts with DNAAF4. Interacts with DLEC1.

It is found in the cytoplasm. The enzyme catalyses ATP + H2O = ADP + phosphate + H(+). In terms of biological role, component of the chaperonin-containing T-complex (TRiC), a molecular chaperone complex that assists the folding of actin, tubulin and other proteins upon ATP hydrolysis. The TRiC complex mediates the folding of WRAP53/TCAB1, thereby regulating telomere maintenance. As part of the TRiC complex may play a role in the assembly of BBSome, a complex involved in ciliogenesis regulating transports vesicles to the cilia. This Sus scrofa (Pig) protein is T-complex protein 1 subunit gamma (CCT3).